Reading from the N-terminus, the 339-residue chain is Phosphate acyltransferase (339 aa).

This sequence belongs to the PlsX family. As to quaternary structure, homodimer. Probably interacts with PlsY.

The protein localises to the cytoplasm. The catalysed reaction is a fatty acyl-[ACP] + phosphate = an acyl phosphate + holo-[ACP]. Its pathway is lipid metabolism; phospholipid metabolism. Catalyzes the reversible formation of acyl-phosphate (acyl-PO(4)) from acyl-[acyl-carrier-protein] (acyl-ACP). This enzyme utilizes acyl-ACP as fatty acyl donor, but not acyl-CoA. The polypeptide is Phosphate acyltransferase (Pasteurella multocida (strain Pm70)).